A 415-amino-acid chain; its full sequence is Putative transcription factor BOFH (415 aa).

Residues 159–221 (SQEPVQHQDQ…NEGEDDDGMD (63 aa)) are disordered. The span at 174–183 (INGGGRGGYW) shows a compositional bias: gly residues. Over residues 193–202 (QQQRRRKKRL) the composition is skewed to basic residues. The segment covering 206 to 220 (ETDDDGNEGEDDDGM) has biased composition (acidic residues). 3 DNA-binding regions span residues 234–238 (REHPF), 303–310 (NKPKMRHY), and 374–377 (YVPT).

It belongs to the FLO/LFY family. As to expression, acts in the floral primordia.

The protein localises to the nucleus. Controls floral meristem identity. Is required very early in flower development and may act here as a transcription factor. The polypeptide is Putative transcription factor BOFH (Brassica oleracea var. botrytis (Cauliflower)).